The sequence spans 266 residues: Diphthine synthase (266 aa).

S-adenosyl-L-methionine-binding positions include L9, D84, V87, 112–113, L169, A210, and H235; that span reads SI.

This sequence belongs to the diphthine synthase family. Homodimer.

It catalyses the reaction 2-[(3S)-amino-3-carboxypropyl]-L-histidyl-[translation elongation factor 2] + 3 S-adenosyl-L-methionine = diphthine-[translation elongation factor 2] + 3 S-adenosyl-L-homocysteine + 3 H(+). Its pathway is protein modification; peptidyl-diphthamide biosynthesis. Functionally, S-adenosyl-L-methionine-dependent methyltransferase that catalyzes the trimethylation of the amino group of the modified target histidine residue in translation elongation factor 2 (EF-2), to form an intermediate called diphthine. The three successive methylation reactions represent the second step of diphthamide biosynthesis. This Methanosarcina acetivorans (strain ATCC 35395 / DSM 2834 / JCM 12185 / C2A) protein is Diphthine synthase.